Here is a 383-residue protein sequence, read N- to C-terminus: Dual-specificity RNA methyltransferase RlmN (383 aa).

Glutamate 95 acts as the Proton acceptor in catalysis. Residues 101–349 enclose the Radical SAM core domain; the sequence is EETRGTLCVS…TTVRKTRGDD (249 aa). A disulfide bond links cysteine 108 and cysteine 354. [4Fe-4S] cluster is bound by residues cysteine 115, cysteine 119, and cysteine 122. S-adenosyl-L-methionine is bound by residues 180 to 181, serine 212, 234 to 236, and asparagine 311; these read GE and SLH. Cysteine 354 (S-methylcysteine intermediate) is an active-site residue.

This sequence belongs to the radical SAM superfamily. RlmN family. [4Fe-4S] cluster is required as a cofactor.

Its subcellular location is the cytoplasm. The enzyme catalyses adenosine(2503) in 23S rRNA + 2 reduced [2Fe-2S]-[ferredoxin] + 2 S-adenosyl-L-methionine = 2-methyladenosine(2503) in 23S rRNA + 5'-deoxyadenosine + L-methionine + 2 oxidized [2Fe-2S]-[ferredoxin] + S-adenosyl-L-homocysteine. The catalysed reaction is adenosine(37) in tRNA + 2 reduced [2Fe-2S]-[ferredoxin] + 2 S-adenosyl-L-methionine = 2-methyladenosine(37) in tRNA + 5'-deoxyadenosine + L-methionine + 2 oxidized [2Fe-2S]-[ferredoxin] + S-adenosyl-L-homocysteine. In terms of biological role, specifically methylates position 2 of adenine 2503 in 23S rRNA and position 2 of adenine 37 in tRNAs. m2A2503 modification seems to play a crucial role in the proofreading step occurring at the peptidyl transferase center and thus would serve to optimize ribosomal fidelity. This chain is Dual-specificity RNA methyltransferase RlmN, found in Paraburkholderia phytofirmans (strain DSM 17436 / LMG 22146 / PsJN) (Burkholderia phytofirmans).